A 206-amino-acid chain; its full sequence is Thymidylate kinase (206 aa).

11-18 is a binding site for ATP; that stretch reads GIDGAGKT.

The protein belongs to the thymidylate kinase family.

The enzyme catalyses dTMP + ATP = dTDP + ADP. Its function is as follows. Phosphorylation of dTMP to form dTDP in both de novo and salvage pathways of dTTP synthesis. In Burkholderia vietnamiensis (strain G4 / LMG 22486) (Burkholderia cepacia (strain R1808)), this protein is Thymidylate kinase.